A 236-amino-acid polypeptide reads, in one-letter code: Protein N-lysine methyltransferase METTL21A (236 aa).

Residues tryptophan 47, 73-75 (GAG), aspartate 112, tryptophan 143, and alanine 161 contribute to the S-adenosyl-L-methionine site.

This sequence belongs to the methyltransferase superfamily. METTL21 family. Interacts with heat shock 70 family members; at least some of these proteins are methylation substrates.

It is found in the cytoplasm. It carries out the reaction L-lysyl-[protein] + 3 S-adenosyl-L-methionine = N(6),N(6),N(6)-trimethyl-L-lysyl-[protein] + 3 S-adenosyl-L-homocysteine + 3 H(+). Its function is as follows. Protein-lysine methyltransferase that selectively trimethylates residues in heat shock protein 70 (HSP70) family members. Contributes to the in vivo trimethylation of Lys residues in HSPA1 and HSPA8. In vitro methylates 'Lys-561' in HSPA1, 'Lys-564' in HSPA2, 'Lys-585' in HSPA5, 'Lys-563' in HSPA6 and 'Lys-561' in HSPA8. The chain is Protein N-lysine methyltransferase METTL21A (METTL21A) from Pongo abelii (Sumatran orangutan).